We begin with the raw amino-acid sequence, 225 residues long: Cytidylate kinase (225 aa).

12–20 (GPSGAGKGT) lines the ATP pocket.

The protein belongs to the cytidylate kinase family. Type 1 subfamily.

It localises to the cytoplasm. It catalyses the reaction CMP + ATP = CDP + ADP. The catalysed reaction is dCMP + ATP = dCDP + ADP. The sequence is that of Cytidylate kinase from Edwardsiella ictaluri (strain 93-146).